The following is a 222-amino-acid chain: Putative N-acetylmannosamine-6-phosphate 2-epimerase (222 aa).

This sequence belongs to the NanE family.

It carries out the reaction an N-acyl-D-glucosamine 6-phosphate = an N-acyl-D-mannosamine 6-phosphate. It participates in amino-sugar metabolism; N-acetylneuraminate degradation; D-fructose 6-phosphate from N-acetylneuraminate: step 3/5. Converts N-acetylmannosamine-6-phosphate (ManNAc-6-P) to N-acetylglucosamine-6-phosphate (GlcNAc-6-P). The sequence is that of Putative N-acetylmannosamine-6-phosphate 2-epimerase from Staphylococcus aureus (strain Mu3 / ATCC 700698).